The following is a 184-amino-acid chain: Translation initiation factor IF-3 (184 aa).

This sequence belongs to the IF-3 family. As to quaternary structure, monomer.

It localises to the cytoplasm. Functionally, IF-3 binds to the 30S ribosomal subunit and shifts the equilibrium between 70S ribosomes and their 50S and 30S subunits in favor of the free subunits, thus enhancing the availability of 30S subunits on which protein synthesis initiation begins. In Hamiltonella defensa subsp. Acyrthosiphon pisum (strain 5AT), this protein is Translation initiation factor IF-3.